We begin with the raw amino-acid sequence, 239 residues long: uncharacterized protein (239 aa).

Positions 13–66 (IEYLVDKLNGPSEFARKTGVTLSTITRWRKGEADPSRSNLVKIAEVTGVSIEWL) constitute an HTH cro/C1-type domain. Positions 24 to 43 (SEFARKTGVTLSTITRWRKG) form a DNA-binding region, H-T-H motif.

This is an uncharacterized protein from Haemophilus influenzae (strain ATCC 51907 / DSM 11121 / KW20 / Rd).